A 102-amino-acid polypeptide reads, in one-letter code: Large ribosomal subunit protein uL24 (102 aa).

The protein belongs to the universal ribosomal protein uL24 family. In terms of assembly, part of the 50S ribosomal subunit.

Functionally, one of two assembly initiator proteins, it binds directly to the 5'-end of the 23S rRNA, where it nucleates assembly of the 50S subunit. In terms of biological role, one of the proteins that surrounds the polypeptide exit tunnel on the outside of the subunit. The chain is Large ribosomal subunit protein uL24 from Alkaliphilus oremlandii (strain OhILAs) (Clostridium oremlandii (strain OhILAs)).